Consider the following 361-residue polypeptide: 5-formaminoimidazole-4-carboxamide-1-(beta)-D-ribofuranosyl 5'-monophosphate synthetase (361 aa).

5-amino-1-(5-phospho-beta-D-ribosyl)imidazole-4-carboxamide is bound by residues His-27 and Ser-94. The ATP-grasp domain occupies 116–348 (RRILRWESER…MGQRIAREIK (233 aa)). ATP contacts are provided by residues 156 to 166 (KFPGARGGRGY), 199 to 202 (EEYV), and Glu-230. Residue Asn-258 coordinates 5-amino-1-(5-phospho-beta-D-ribosyl)imidazole-4-carboxamide. Mg(2+)-binding residues include Gln-297 and Glu-310.

This sequence belongs to the phosphohexose mutase family. In terms of assembly, homohexamer. Dimer of trimers. Mg(2+) is required as a cofactor. The cofactor is Mn(2+).

It catalyses the reaction 5-amino-1-(5-phospho-beta-D-ribosyl)imidazole-4-carboxamide + formate + ATP = 5-formamido-1-(5-phospho-D-ribosyl)imidazole-4-carboxamide + ADP + phosphate. It participates in purine metabolism; IMP biosynthesis via de novo pathway; 5-formamido-1-(5-phospho-D-ribosyl)imidazole-4-carboxamide from 5-amino-1-(5-phospho-D-ribosyl)imidazole-4-carboxamide (formate route): step 1/1. With respect to regulation, inhibited by ADP. Functionally, catalyzes the ATP- and formate-dependent formylation of 5-aminoimidazole-4-carboxamide-1-beta-d-ribofuranosyl 5'-monophosphate (AICAR) to 5-formaminoimidazole-4-carboxamide-1-beta-d-ribofuranosyl 5'-monophosphate (FAICAR) in the absence of folates. The protein is 5-formaminoimidazole-4-carboxamide-1-(beta)-D-ribofuranosyl 5'-monophosphate synthetase of Methanocaldococcus jannaschii (strain ATCC 43067 / DSM 2661 / JAL-1 / JCM 10045 / NBRC 100440) (Methanococcus jannaschii).